We begin with the raw amino-acid sequence, 103 residues long: Co-chaperonin GroES (103 aa).

This sequence belongs to the GroES chaperonin family. In terms of assembly, heptamer of 7 subunits arranged in a ring. Interacts with the chaperonin GroEL.

It localises to the cytoplasm. In terms of biological role, together with the chaperonin GroEL, plays an essential role in assisting protein folding. The GroEL-GroES system forms a nano-cage that allows encapsulation of the non-native substrate proteins and provides a physical environment optimized to promote and accelerate protein folding. GroES binds to the apical surface of the GroEL ring, thereby capping the opening of the GroEL channel. This chain is Co-chaperonin GroES, found in Prochlorococcus marinus subsp. pastoris (strain CCMP1986 / NIES-2087 / MED4).